Reading from the N-terminus, the 497-residue chain is Meiosis-specific serine/threonine-protein kinase MEK1 (497 aa).

One can recognise an FHA domain in the interval 47–102 (VKVGRNDKECQLVLTNPSISSVHCVFWCVFFDEDSIPMFYVKDCSLNGTYLNGLLL). Positions 162–444 (EITNRIVGNG…SKQGLKHIWI (283 aa)) constitute a Protein kinase domain. ATP-binding positions include 168–176 (VGNGTFGHV) and Lys199. The active-site Proton acceptor is Asp290.

It belongs to the protein kinase superfamily. CAMK Ser/Thr protein kinase family. CHEK2 subfamily.

It catalyses the reaction L-seryl-[protein] + ATP = O-phospho-L-seryl-[protein] + ADP + H(+). It carries out the reaction L-threonyl-[protein] + ATP = O-phospho-L-threonyl-[protein] + ADP + H(+). In terms of biological role, probable protein kinase required for meiotic recombination. The chain is Meiosis-specific serine/threonine-protein kinase MEK1 (MEK1) from Saccharomyces cerevisiae (strain ATCC 204508 / S288c) (Baker's yeast).